Consider the following 295-residue polypeptide: Bifunctional protein FolD (295 aa).

NADP(+)-binding positions include 166–168 (GRS), Ser-195, and Ile-236.

It belongs to the tetrahydrofolate dehydrogenase/cyclohydrolase family. As to quaternary structure, homodimer.

The catalysed reaction is (6R)-5,10-methylene-5,6,7,8-tetrahydrofolate + NADP(+) = (6R)-5,10-methenyltetrahydrofolate + NADPH. It catalyses the reaction (6R)-5,10-methenyltetrahydrofolate + H2O = (6R)-10-formyltetrahydrofolate + H(+). The protein operates within one-carbon metabolism; tetrahydrofolate interconversion. In terms of biological role, catalyzes the oxidation of 5,10-methylenetetrahydrofolate to 5,10-methenyltetrahydrofolate and then the hydrolysis of 5,10-methenyltetrahydrofolate to 10-formyltetrahydrofolate. The protein is Bifunctional protein FolD of Chlorobium luteolum (strain DSM 273 / BCRC 81028 / 2530) (Pelodictyon luteolum).